We begin with the raw amino-acid sequence, 451 residues long: UDP-N-acetylmuramoylalanine--D-glutamate ligase (451 aa).

118 to 124 is a binding site for ATP; sequence GTKGKST.

It belongs to the MurCDEF family.

The protein resides in the cytoplasm. The enzyme catalyses UDP-N-acetyl-alpha-D-muramoyl-L-alanine + D-glutamate + ATP = UDP-N-acetyl-alpha-D-muramoyl-L-alanyl-D-glutamate + ADP + phosphate + H(+). It participates in cell wall biogenesis; peptidoglycan biosynthesis. Cell wall formation. Catalyzes the addition of glutamate to the nucleotide precursor UDP-N-acetylmuramoyl-L-alanine (UMA). The sequence is that of UDP-N-acetylmuramoylalanine--D-glutamate ligase (murD) from Borreliella burgdorferi (strain ATCC 35210 / DSM 4680 / CIP 102532 / B31) (Borrelia burgdorferi).